Reading from the N-terminus, the 694-residue chain is Follicle-stimulating hormone receptor (694 aa).

Positions 1–17 (MAFLWISFLVFLGSGSG) are cleaved as a signal peptide. Disulfide bonds link Cys18–Cys25 and Cys23–Cys32. Residues 18 to 46 (CHHRICHCSDRVFICQESKVTEIPSDIPR) enclose the LRRNT domain. Residues 18–367 (CHHRICHCSD…EDIMGYNFLR (350 aa)) are Extracellular-facing. LRR repeat units lie at residues 49-72 (VEMRFVLTKLQVIPRGAFSGFRDL), 73-97 (EKIEISQNDALEVIEADVFSNLPKL), 98-118 (HEIRIEKANNLVLIDPEAFWN), 119-143 (LPNLRYLLISNTGIKHLPAVYKIQS), 144-169 (HQKVLLDIQDNINIRTIERNSFAGLS), 170-192 (SESEILWLNKNGIQEIQNQAFNG), 193-216 (TQLDELNLSDNINLEDLPNGIFQG), 217-240 (ANGPVILDISRTRIHSLPSDGLKN), and 241-259 (LKKLKARSAYNFKTLPNLD). Asn191 and Asn199 each carry an N-linked (GlcNAc...) asparagine glycan. An N-linked (GlcNAc...) asparagine glycan is attached at Asn268. 4 disulfide bridges follow: Cys275/Cys347, Cys276/Cys292, Cys276/Cys357, and Cys292/Cys339. The N-linked (GlcNAc...) asparagine glycan is linked to Asn293. Residue Tyr336 is modified to Sulfotyrosine. Residues 368-388 (VLIWFISILSITGNIVVLVIL) traverse the membrane as a helical segment. Over 389 to 399 (ITSQYKLTVPR) the chain is Cytoplasmic. A helical membrane pass occupies residues 400 to 422 (FLMCNLAFADLCIGIYLLLIASV). The Extracellular portion of the chain corresponds to 423-444 (DIHTKSQYHNYAIDWQTGAGCD). An intrachain disulfide couples Cys443 to Cys518. The helical transmembrane segment at 445-466 (AAGFFTVFASELSVYTLTAITL) threads the bilayer. Over 467–486 (ERWHTITYAMQLDRKVRLRH) the chain is Cytoplasmic. A helical membrane pass occupies residues 487–509 (AASIMLIGWIFAFSVALLPIFGV). The Extracellular segment spans residues 510 to 529 (SSYMKVSICLPMDIDSPLSQ). The helical transmembrane segment at 530–551 (FYVISLLVLNVLASVIICTCYT) threads the bilayer. Topologically, residues 552-574 (HIYFTVRNPNIISSTSDAKIAKR) are cytoplasmic. Residues 575 to 598 (MAMLIFTDFLCMAPISFFAISASV) form a helical membrane-spanning segment. The Extracellular portion of the chain corresponds to 599–609 (KMPLITVSKSK). A helical membrane pass occupies residues 610-631 (ILLVLFYPINSCANPFLYAVFT). Residues 632 to 694 (KTFRRDFFIL…YKLVPLNHLS (63 aa)) are Cytoplasmic-facing.

Belongs to the G-protein coupled receptor 1 family. FSH/LSH/TSH subfamily. In terms of assembly, homotrimer. Functions as a homotrimer binding the FSH hormone heterodimer composed of CGA and FSHB. Interacts with ARRB2. Interacts with APPL2; interaction is independent of follicle stimulating hormone stimulation. In terms of processing, N-glycosylated; indirectly required for FSH-binding, possibly via a conformational change that allows high affinity binding of hormone. Sulfated.

The protein localises to the cell membrane. Its function is as follows. G protein-coupled receptor for follitropin, the follicle-stimulating hormone. Through cAMP production activates the downstream PI3K-AKT and ERK1/ERK2 signaling pathways. In Notamacropus eugenii (Tammar wallaby), this protein is Follicle-stimulating hormone receptor (FSHR).